A 286-amino-acid polypeptide reads, in one-letter code: tRNA (guanine-N(1)-)-methyltransferase (286 aa).

S-adenosyl-L-methionine is bound by residues Gly116 and 140-145; that span reads IGDYVL. The tract at residues 232–286 is disordered; it reads DALPPGSLTPHEEALAAEARLHAGRSAETPPPAGAAGSQAEGPPGTSPSDAAVAH.

The protein belongs to the RNA methyltransferase TrmD family. As to quaternary structure, homodimer.

Its subcellular location is the cytoplasm. The catalysed reaction is guanosine(37) in tRNA + S-adenosyl-L-methionine = N(1)-methylguanosine(37) in tRNA + S-adenosyl-L-homocysteine + H(+). Its function is as follows. Specifically methylates guanosine-37 in various tRNAs. The chain is tRNA (guanine-N(1)-)-methyltransferase from Acidothermus cellulolyticus (strain ATCC 43068 / DSM 8971 / 11B).